The sequence spans 93 residues: Putative pterin-4-alpha-carbinolamine dehydratase (93 aa).

The protein belongs to the pterin-4-alpha-carbinolamine dehydratase family.

The catalysed reaction is (4aS,6R)-4a-hydroxy-L-erythro-5,6,7,8-tetrahydrobiopterin = (6R)-L-erythro-6,7-dihydrobiopterin + H2O. In Roseiflexus castenholzii (strain DSM 13941 / HLO8), this protein is Putative pterin-4-alpha-carbinolamine dehydratase.